The chain runs to 202 residues: Translation initiation factor IF-3 (202 aa).

The protein belongs to the IF-3 family. As to quaternary structure, monomer.

It localises to the cytoplasm. Functionally, IF-3 binds to the 30S ribosomal subunit and shifts the equilibrium between 70S ribosomes and their 50S and 30S subunits in favor of the free subunits, thus enhancing the availability of 30S subunits on which protein synthesis initiation begins. In Prochlorococcus marinus (strain MIT 9211), this protein is Translation initiation factor IF-3.